Reading from the N-terminus, the 147-residue chain is uncharacterized protein (147 aa).

This sequence to M.jannaschii MJ0215.

This is an uncharacterized protein from Methanocaldococcus jannaschii (strain ATCC 43067 / DSM 2661 / JAL-1 / JCM 10045 / NBRC 100440) (Methanococcus jannaschii).